An 858-amino-acid chain; its full sequence is Leucine--tRNA ligase (858 aa).

The short motif at 42–52 is the 'HIGH' region element; that stretch reads PYPSGRLHMGH. The short motif at 618-622 is the 'KMSKS' region element; sequence KMSKS. Lys-621 contacts ATP.

It belongs to the class-I aminoacyl-tRNA synthetase family.

The protein localises to the cytoplasm. The enzyme catalyses tRNA(Leu) + L-leucine + ATP = L-leucyl-tRNA(Leu) + AMP + diphosphate. This Photobacterium profundum (strain SS9) protein is Leucine--tRNA ligase.